We begin with the raw amino-acid sequence, 335 residues long: MAAPWVLPAPLSPAQLKRLEQHRYSSAGRSLLEPWLQPYWGWLVERLPPWLAPNAITLGGLLLNCLTALPLIASCPTATEQAPFWAYILGALGLFIYQSLDAIDGKQARRTNSSSPLGELFDHGCDSISTVFVVLGSCIAIRLGTNPDWLFFCCFVGLFMFYSAHWQTYVSGILRFGKVDVTEVQIAITMLLLVSAFCGTAVWDYKVHLVGLELKFFAVVGILCGTAVSCFNYFRIIFGGGVGKNGSTIAVAHMTKSEISLQDTAFIGPGLLFLDQYFNSFIDEYVVLWIALFISLFDMLRYATGVCLQIAAHLHIHVFRISSHQAPEQVQNHND.

A run of 2 helical transmembrane segments spans residues 53–73 (PNAI…PLIA) and 84–108 (FWAY…GKQA). N54 serves as a coordination point for CDP-choline. 2 residues coordinate Mg(2+): D101 and D104. R109 lines the CDP-choline pocket. The next 6 helical transmembrane spans lie at 116–140 (PLGE…SCIA), 151–169 (FFCC…WQTY), 181–197 (VTEV…VSAF), 213–238 (ELKF…RIIF), 267–276 (IGPGLLFLDQ), and 284–313 (EYVV…IAAH). Residue D122 coordinates Mg(2+). H123 (proton acceptor) is an active-site residue. D126 lines the Mg(2+) pocket.

The protein belongs to the CDP-alcohol phosphatidyltransferase class-I family. The cofactor is Mg(2+). Requires Mn(2+) as cofactor.

Its subcellular location is the golgi apparatus membrane. The catalysed reaction is CDP-choline + a 1,2-diacyl-sn-glycerol = a 1,2-diacyl-sn-glycero-3-phosphocholine + CMP + H(+). It catalyses the reaction 1-octadecanoyl-2-(5Z,8Z,11Z,14Z-eicosatetraenoyl)-sn-glycerol + CDP-choline = 1-octadecanoyl-2-(5Z,8Z,11Z,14Z-eicosatetraenoyl)-sn-glycero-3-phosphocholine + CMP + H(+). It carries out the reaction 1-hexadecanoyl-2-(9Z-octadecenoyl)-sn-glycerol + CDP-choline = 1-hexadecanoyl-2-(9Z-octadecenoyl)-sn-glycero-3-phosphocholine + CMP + H(+). The enzyme catalyses 1-hexadecanoyl-2-(4Z,7Z,10Z,13Z,16Z,19Z-docosahexaenoyl)-sn-glycerol + CDP-choline = 1-hexadecanoyl-2-(4Z,7Z,10Z,13Z,16Z,19Z-docosahexaenoyl)-sn-glycero-3-phosphocholine + CMP + H(+). The catalysed reaction is 1,2-dioctanoyl-sn-glycerol + CDP-choline = 1,2-dioctanoyl-sn-glycero-3-phosphocholine + CMP + H(+). Its pathway is phospholipid metabolism; phosphatidylcholine biosynthesis; phosphatidylcholine from phosphocholine: step 2/2. Functionally, catalyzes the final step of de novo phosphatidylcholine (PC) synthesis, i.e. the transfer of choline phosphate from CDP-choline to the free hydroxyl of a diacylglycerol (DAG), producing a PC. It thereby plays a central role in the formation and maintenance of vesicular membranes. This chain is Cholinephosphotransferase 1 (CHPT1), found in Gallus gallus (Chicken).